Consider the following 338-residue polypeptide: Nucleoid-associated protein HI_0839 (338 aa).

The protein belongs to the YejK family.

It is found in the cytoplasm. The protein resides in the nucleoid. The protein is Nucleoid-associated protein HI_0839 of Haemophilus influenzae (strain ATCC 51907 / DSM 11121 / KW20 / Rd).